The primary structure comprises 354 residues: uncharacterized protein (354 aa).

An ABC transporter domain is found at 48-285; that stretch reads VETWEISKIY…DEGYEVVLKG (238 aa). 87-94 is a binding site for ATP; that stretch reads GPNGAGKT.

It belongs to the ABC transporter superfamily.

This is an uncharacterized protein from Synechocystis sp. (strain ATCC 27184 / PCC 6803 / Kazusa).